Reading from the N-terminus, the 458-residue chain is Elongation factor 1-alpha (458 aa).

Gly2 is modified (n,N,N-trimethylglycine). Lys3 bears the N6,N6-dimethyllysine; alternate mark. Lys3 is modified (N6-methyllysine; alternate). Residues 5–240 form the tr-type G domain; it reads KTHVNVVVIG…DAIDPPQRPS (236 aa). Positions 14–21 are G1; that stretch reads GHVDSGKS. 14–21 serves as a coordination point for GTP; the sequence is GHVDSGKS. Lys30 carries the N6-methyllysine modification. The tract at residues 70-74 is G2; sequence GITID. Lys79 carries the N6,N6,N6-trimethyllysine modification. Positions 91–94 are G3; it reads DAPG. GTP is bound by residues 91–95 and 153–156; these read DAPGH and NKMD. The interval 153–156 is G4; the sequence is NKMD. The interval 192-194 is G5; it reads SGW. Lys316 is modified (N6,N6-dimethyllysine; alternate). The residue at position 316 (Lys316) is an N6-methyllysine; alternate. The residue at position 390 (Lys390) is an N6-methyllysine.

It belongs to the TRAFAC class translation factor GTPase superfamily. Classic translation factor GTPase family. EF-Tu/EF-1A subfamily.

It is found in the cytoplasm. This protein promotes the GTP-dependent binding of aminoacyl-tRNA to the A-site of ribosomes during protein biosynthesis. In Absidia glauca (Pin mould), this protein is Elongation factor 1-alpha (TEF-1).